Consider the following 425-residue polypeptide: MSGDYQLRCPTCGLRITDRYSSFCPAGHPGLLVTDYPERTLSLSGQPGIFRYESWLPVRGRLPFTGGTVTYQSDGLAEELGLAHLFIGFNGYWPERGADLVTCSFKELEAVPSMLRATERTAGILVVASAGNTARAFCQVSALTGIPVVIVVPQSALPRLWTTEPAPAALVIGVDGDYADAIAYSTALAAVDPRLIVEGGARNVARRDGMGTVMLDGAVTIGRIPDHYVQAVGSGTGGVAAYEAASRLIRDGRFGGRLPILHLAQNLPFVPMVAAWEEHTRDLQVGPGTPYTEEAEQWVSAPVLTNRTPPYGVPGGTYDALEATGGEMYAISNGLARAAGTLFTDCEGIDLDPAAAVATASLIQAIEMGTIEPGSRVLLNITGGGYDRVVEDHTLVPTPAGYRVPAGNPDDEIRRDVITWVNDHA.

The residue at position 106 (K106) is an N6-(pyridoxal phosphate)lysine. Pyridoxal 5'-phosphate-binding residues include N132 and T382.

Belongs to the threonine synthase family. Cysteate synthase subfamily. Homotrimer. It depends on pyridoxal 5'-phosphate as a cofactor.

The enzyme catalyses O-phospho-L-serine + sulfite + H(+) = L-cysteate + phosphate. It participates in cofactor biosynthesis; coenzyme M biosynthesis. Its function is as follows. Specifically catalyzes the beta-elimination of phosphate from L-phosphoserine and the beta-addition of sulfite to the dehydroalanine intermediate to produce L-cysteate. The chain is Cysteate synthase from Methanosphaerula palustris (strain ATCC BAA-1556 / DSM 19958 / E1-9c).